The sequence spans 273 residues: Mitochondrial distribution and morphology protein 12 (273 aa).

An SMP-LTD domain is found at 1 to 273 (MSIDFDWSKL…LVWPSYITIE (273 aa)). A disordered region spans residues 124-145 (LTSPIPESRPSTPMDNHQERDR).

The protein belongs to the MDM12 family. As to quaternary structure, component of the ER-mitochondria encounter structure (ERMES) or MDM complex, composed of mmm1, mdm10, mdm12 and mdm34. A mmm1 homodimer associates with one molecule of mdm12 on each side in a pairwise head-to-tail manner, and the SMP-LTD domains of mmm1 and mdm12 generate a continuous hydrophobic tunnel for phospholipid trafficking.

The protein resides in the mitochondrion outer membrane. Its subcellular location is the endoplasmic reticulum membrane. In terms of biological role, component of the ERMES/MDM complex, which serves as a molecular tether to connect the endoplasmic reticulum (ER) and mitochondria. Components of this complex are involved in the control of mitochondrial shape and protein biogenesis, and function in nonvesicular lipid trafficking between the ER and mitochondria. Mdm12 is required for the interaction of the ER-resident membrane protein mmm1 and the outer mitochondrial membrane-resident beta-barrel protein mdm10. The mdm12-mmm1 subcomplex functions in the major beta-barrel assembly pathway that is responsible for biogenesis of all mitochondrial outer membrane beta-barrel proteins, and acts in a late step after the SAM complex. The mdm10-mdm12-mmm1 subcomplex further acts in the TOM40-specific pathway after the action of the mdm12-mmm1 complex. Essential for establishing and maintaining the structure of mitochondria and maintenance of mtDNA nucleoids. In Schizosaccharomyces pombe (strain 972 / ATCC 24843) (Fission yeast), this protein is Mitochondrial distribution and morphology protein 12.